The chain runs to 122 residues: Large ribosomal subunit protein eL18 (122 aa).

It belongs to the eukaryotic ribosomal protein eL18 family.

In Pyrobaculum aerophilum (strain ATCC 51768 / DSM 7523 / JCM 9630 / CIP 104966 / NBRC 100827 / IM2), this protein is Large ribosomal subunit protein eL18.